The primary structure comprises 400 residues: MNPASAPPPLPPPGQQVIHVTQDLDTDLEALFNSVMNPKPSSWRKKILPESFFKEPDSGSHSRQSSTDSSGGHPGPRLAGGAQHVRSHSSPASLQLGTGAGAAGSPAQQHAHLRQQSYDVTDELPLPPGWEMTFTATGQRYFLNHIEKITTWQDPRKAMNQPLNHMNLHPAVSSTPVPQRSMAVSQPNLVMNHQHQQQMAPSTLSQQNHPTQNPPAGLMSMPNALTTQQQQQQKLRLQRIQMERERIRMRQEELMRQEAALCRQLPMEAETLAPVQAAVNPPTMTPDMRSITNNSSDPFLNGGPYHSREQSTDSGLGLGCYSVPTTPEDFLSNVDEMDTGENAGQTPMNINPQQTRFPDFLDCLPGTNVDLGTLESEDLIPLFNDVESALNKSEPFLTWL.

Lysine 46 participates in a covalent cross-link: Glycyl lysine isopeptide (Lys-Gly) (interchain with G-Cter in ubiquitin). A disordered region spans residues 52 to 117 (FFKEPDSGSH…QQHAHLRQQS (66 aa)). The segment covering 61–70 (HSRQSSTDSS) has biased composition (polar residues). Phosphoserine is present on serine 62. A Phosphoserine; by LATS2 modification is found at serine 89. At serine 105 the chain carries Phosphoserine. A WW domain is found at 124–157 (LPLPPGWEMTFTATGQRYFLNHIEKITTWQDPRK). The tract at residues 222–400 (PNALTTQQQQ…NKSEPFLTWL (179 aa)) is required for interaction with PALS1. The stretch at 225–259 (LTTQQQQQQKLRLQRIQMERERIRMRQEELMRQEA) forms a coiled coil. Serine 295 bears the Phosphoserine mark. Serine 311 carries the post-translational modification Phosphoserine; by LATS2. The short motif at 394 to 400 (EPFLTWL) is the PDZ-binding element.

As to quaternary structure, binds to SLC9A3R2 via the PDZ motif at the plasma membrane. Binds to YWHAZ in vivo and in vitro through the phosphoserine-binding motif RSHSSP. Interacts (via coiled-coil domain) with SMAD2 (via MH1 domain), SMAD3 and SMAD4. Interacts with MED15. Interacts with PAX8 and NKX2-1. Interacts with TEAD1, TEAD2, TEAD3 and TEAD4. Interacts (via WW domain) with PALS1. Interacts with LATS1. Interacts with YAP1 (when phosphorylated at 'Ser-127'). Interacts (via WW domain) with PRRG4 (via cytoplasmic domain). Interacts (via WW domain) with AMOTL2 (via PPXY motif); the interaction promotes WWTR1/TAZ localization to the cytoplasm and tight junctions, thereby inhibiting its transcriptional coactivator properties. Interacts (via WW domain) with AMOT isoform 1; the interaction facilitates translocation of WWTR1/TAZ to the cytoplasm. In terms of processing, phosphorylated by LATS2 and STK3/MST2. Phosphorylation by LATS2 results in creation of 14-3-3 binding sites, retention in the cytoplasm, and functional inactivation. Phosphorylation results in the inhibition of transcriptional coactivation through YWHAZ-mediated nuclear export. Phosphorylated in the nucleus by PRP4K; phosphorylation leads to nuclear exclusion. Post-translationally, ubiquitinated at Lys-46; leading to proteasomal degradation. Deubiquitinated and stabilized by UCHL1 at Lys-46; leading to inhibition of osteoclastogenesis. As to expression, highly expressed in kidney, heart, placenta and lung. Expressed in the thyroid tissue.

The protein resides in the nucleus. It is found in the cytoplasm. Its subcellular location is the cell membrane. It localises to the cell junction. The protein localises to the tight junction. Transcriptional coactivator which acts as a downstream regulatory target in the Hippo signaling pathway that plays a pivotal role in organ size control and tumor suppression by restricting proliferation and promoting apoptosis. The core of this pathway is composed of a kinase cascade wherein STK3/MST2 and STK4/MST1, in complex with its regulatory protein SAV1, phosphorylates and activates LATS1/2 in complex with its regulatory protein MOB1, which in turn phosphorylates and inactivates YAP1 oncoprotein and WWTR1/TAZ. WWTR1 enhances PAX8 and NKX2-1/TTF1-dependent gene activation. In conjunction with YAP1, involved in the regulation of TGFB1-dependent SMAD2 and SMAD3 nuclear accumulation. Plays a key role in coupling SMADs to the transcriptional machinery such as the mediator complex. Regulates embryonic stem-cell self-renewal, promotes cell proliferation and epithelial-mesenchymal transition. This Homo sapiens (Human) protein is WW domain-containing transcription regulator protein 1.